Reading from the N-terminus, the 315-residue chain is Methionyl-tRNA formyltransferase (315 aa).

110-113 (SLLP) contacts (6S)-5,6,7,8-tetrahydrofolate.

The protein belongs to the Fmt family.

It carries out the reaction L-methionyl-tRNA(fMet) + (6R)-10-formyltetrahydrofolate = N-formyl-L-methionyl-tRNA(fMet) + (6S)-5,6,7,8-tetrahydrofolate + H(+). Its function is as follows. Attaches a formyl group to the free amino group of methionyl-tRNA(fMet). The formyl group appears to play a dual role in the initiator identity of N-formylmethionyl-tRNA by promoting its recognition by IF2 and preventing the misappropriation of this tRNA by the elongation apparatus. This is Methionyl-tRNA formyltransferase from Mycolicibacterium paratuberculosis (strain ATCC BAA-968 / K-10) (Mycobacterium paratuberculosis).